A 439-amino-acid polypeptide reads, in one-letter code: Probable threonine protease PRSS50 (439 aa).

2 disordered regions span residues 1-22 and 48-130; these read MEPWCGAEVRGQGPQGPRVPGA and ERIR…TMAP. An N-terminal signal peptide occupies residues 1–47; that stretch reads MEPWCGAEVRGQGPQGPRVPGASRSRSRALLLLLLLLLLLLPRRPAG. Low complexity predominate over residues 9-21; the sequence is VRGQGPQGPRVPG. Residues 48–415 are Extracellular-facing; sequence ERIRPRRPPR…WIWDRLSGEP (368 aa). Over residues 51 to 61 the composition is skewed to basic residues; the sequence is RPRRPPRHAHP. The span at 112 to 127 shows a compositional bias: low complexity; it reads QAQTNQTTTAPPNSQT. Asparagine 116 and asparagine 187 each carry an N-linked (GlcNAc...) asparagine glycan. The Peptidase S1 domain occupies 157–412; it reads FCGSSHEPDP…YRPWIWDRLS (256 aa). Residues cysteine 192 and cysteine 208 are joined by a disulfide bond. Histidine 207 serves as the catalytic Charge relay system. Asparagine 226 is a glycosylation site (N-linked (GlcNAc...) asparagine). Catalysis depends on aspartate 260, which acts as the Charge relay system. 3 disulfide bridges follow: cysteine 294/cysteine 370, cysteine 327/cysteine 350, and cysteine 360/cysteine 388. The Charge relay system role is filled by threonine 364. Residues 416–436 form a helical membrane-spanning segment; the sequence is LALPAPSRTLLLAFLLLLILL. Residues 437 to 439 are Cytoplasmic-facing; it reads GTL.

Belongs to the peptidase S1 family.

The protein resides in the membrane. May be involved in proteolysis through its threonine endopeptidase activity. This is Probable threonine protease PRSS50 (Prss50) from Mus musculus (Mouse).